A 304-amino-acid polypeptide reads, in one-letter code: MILLEINNRIVEETLTVKFKNAIAGNKAESIDVTVADFDGVLFHISNINGDKTKVRTSISLKFYKQLQEHGADELLKREYGDLLVAPEDGYNVSVLVDLENIPENWEETVRKIGLLKRNCFASVFEKYFDFQSQGEGEGEGQKRAVINYRNDETMYVEAKPDRVTVVFSTIFRDEDDVVLGKVFMQELREGRRASHTAPQVLFSHREPPLELANTGARVGENIGYVTFVLFPRHTAKETRDNTINLIHMFRDYLHYHIKCSKAYIHSRMRAKTTEFLKVLNRARPEPKITEKKTITGRTFIRKE.

It belongs to the ARPC2 family. Component of the Arp2/3 complex.

Its subcellular location is the cytoplasm. The protein localises to the cytoskeleton. In terms of biological role, functions as actin-binding component of the Arp2/3 complex which is involved in regulation of actin polymerization and together with an activating nucleation-promoting factor (NPF) mediates the formation of branched actin networks. Seems to contact the mother actin filament. In Anopheles gambiae (African malaria mosquito), this protein is Probable actin-related protein 2/3 complex subunit 2 (Arc-p34).